Consider the following 572-residue polypeptide: Proline--tRNA ligase (572 aa).

It belongs to the class-II aminoacyl-tRNA synthetase family. ProS type 1 subfamily. Homodimer.

The protein resides in the cytoplasm. The enzyme catalyses tRNA(Pro) + L-proline + ATP = L-prolyl-tRNA(Pro) + AMP + diphosphate. Its function is as follows. Catalyzes the attachment of proline to tRNA(Pro) in a two-step reaction: proline is first activated by ATP to form Pro-AMP and then transferred to the acceptor end of tRNA(Pro). As ProRS can inadvertently accommodate and process non-cognate amino acids such as alanine and cysteine, to avoid such errors it has two additional distinct editing activities against alanine. One activity is designated as 'pretransfer' editing and involves the tRNA(Pro)-independent hydrolysis of activated Ala-AMP. The other activity is designated 'posttransfer' editing and involves deacylation of mischarged Ala-tRNA(Pro). The misacylated Cys-tRNA(Pro) is not edited by ProRS. The sequence is that of Proline--tRNA ligase from Shewanella amazonensis (strain ATCC BAA-1098 / SB2B).